We begin with the raw amino-acid sequence, 195 residues long: Peptidyl-tRNA hydrolase (195 aa).

Tyr17 contacts tRNA. His22 functions as the Proton acceptor in the catalytic mechanism. TRNA contacts are provided by Tyr68, Asn70, and Asn116.

It belongs to the PTH family. In terms of assembly, monomer.

The protein localises to the cytoplasm. The enzyme catalyses an N-acyl-L-alpha-aminoacyl-tRNA + H2O = an N-acyl-L-amino acid + a tRNA + H(+). Hydrolyzes ribosome-free peptidyl-tRNAs (with 1 or more amino acids incorporated), which drop off the ribosome during protein synthesis, or as a result of ribosome stalling. Its function is as follows. Catalyzes the release of premature peptidyl moieties from peptidyl-tRNA molecules trapped in stalled 50S ribosomal subunits, and thus maintains levels of free tRNAs and 50S ribosomes. This chain is Peptidyl-tRNA hydrolase, found in Shewanella frigidimarina (strain NCIMB 400).